Consider the following 428-residue polypeptide: C4-dicarboxylate transport protein (428 aa).

The next 8 membrane-spanning stretches (helical) occupy residues 8-28 (SLYF…HFYP), 44-64 (LIKM…IAGM), 76-96 (VALL…LIIV), 142-162 (IGAF…LFGF), 184-204 (VIFG…FGAM), 222-242 (LIIC…GSIA), 326-346 (IVHQ…AAGV), and 352-372 (IVLA…LALI).

Belongs to the dicarboxylate/amino acid:cation symporter (DAACS) (TC 2.A.23) family.

It localises to the cell inner membrane. Its function is as follows. Responsible for the transport of dicarboxylates such as succinate, fumarate, and malate from the periplasm across the membrane. The chain is C4-dicarboxylate transport protein from Escherichia coli O127:H6 (strain E2348/69 / EPEC).